Here is a 77-residue protein sequence, read N- to C-terminus: uncharacterized protein (77 aa).

This is an uncharacterized protein from Saccharomyces cerevisiae (strain ATCC 204508 / S288c) (Baker's yeast).